Consider the following 274-residue polypeptide: Large ribosomal subunit protein uL2c (274 aa).

Positions 230-252 are disordered; the sequence is HPHGGGEGRSPIGRSKPLTPWGK.

It belongs to the universal ribosomal protein uL2 family. In terms of assembly, part of the 50S ribosomal subunit.

The protein resides in the plastid. This Euglena longa (Euglenophycean alga) protein is Large ribosomal subunit protein uL2c (rpl2).